The chain runs to 382 residues: MSNRHLPIGTRDEFGPRAIRKENLIQTISQQFIQAGFERVKTPLLEYRDVFKPLAVSGEQPYQMLDDAGESVVMRPDLTLPLARLLSTTSIVPPVQWWYVGDIFRVKKSLSGTYNQITQAGIELIGYRSLKAEWACLSEAGKICRTLGLTHLTLELSDAQFVPQILRTLQLNDAAADAFQTAFFAKELSTYQDLIAPLATNPLYPFLQQWPWLFGDSETIFAELKRLLPSNVITDRLAPLQQTVAFLKGQFPELRVTIDLTSRPPQSYYTGIFFHAYVDGGHQYLFSGGRYDKLLASFQQELLPAVGLAFDIDAVTDQLPNAPDQPLTFVYGLPSQWQAAAAMVATTPNARLCLVDTLAEAQAAATKQHANLIDLSPKEAIL.

Belongs to the class-II aminoacyl-tRNA synthetase family. HisZ subfamily. As to quaternary structure, heteromultimer composed of HisG and HisZ subunits.

It is found in the cytoplasm. Its pathway is amino-acid biosynthesis; L-histidine biosynthesis; L-histidine from 5-phospho-alpha-D-ribose 1-diphosphate: step 1/9. Its function is as follows. Required for the first step of histidine biosynthesis. May allow the feedback regulation of ATP phosphoribosyltransferase activity by histidine. The sequence is that of ATP phosphoribosyltransferase regulatory subunit from Lacticaseibacillus paracasei (strain ATCC 334 / BCRC 17002 / CCUG 31169 / CIP 107868 / KCTC 3260 / NRRL B-441) (Lactobacillus paracasei).